A 514-amino-acid polypeptide reads, in one-letter code: Peptide chain release factor 3 (514 aa).

The region spanning 8–268 (KKRRTFAIIS…TFLEFAPEPH (261 aa)) is the tr-type G domain. GTP-binding positions include 17 to 24 (SHPDAGKT), 85 to 89 (DTPGH), and 139 to 142 (NKLD).

Belongs to the TRAFAC class translation factor GTPase superfamily. Classic translation factor GTPase family. PrfC subfamily.

Its subcellular location is the cytoplasm. In terms of biological role, increases the formation of ribosomal termination complexes and stimulates activities of RF-1 and RF-2. It binds guanine nucleotides and has strong preference for UGA stop codons. It may interact directly with the ribosome. The stimulation of RF-1 and RF-2 is significantly reduced by GTP and GDP, but not by GMP. The polypeptide is Peptide chain release factor 3 (Streptococcus agalactiae serotype Ia (strain ATCC 27591 / A909 / CDC SS700)).